The chain runs to 60 residues: Large ribosomal subunit protein eL37 (60 aa).

Zn(2+)-binding residues include cysteine 19, cysteine 22, cysteine 34, and cysteine 37. The C4-type zinc-finger motif lies at 19–37; the sequence is CRRCGRMSYHKRHKICSSC.

Belongs to the eukaryotic ribosomal protein eL37 family. The cofactor is Zn(2+).

Its function is as follows. Binds to the 23S rRNA. The polypeptide is Large ribosomal subunit protein eL37 (Methanospirillum hungatei JF-1 (strain ATCC 27890 / DSM 864 / NBRC 100397 / JF-1)).